The primary structure comprises 276 residues: Homeobox-leucine zipper protein HOX11 (276 aa).

The interval 1–92 (MVDGHLEAST…DDGGSARKKL (92 aa)) is disordered. The segment covering 39–48 (LSSSPNNSAG) has biased composition (polar residues). Positions 58-73 (HGLGGNDAAPGGGGGD) are enriched in gly residues. The homeobox DNA-binding region spans 87 to 146 (SARKKLRLSKEQSAFLEESFKEHSTLNPKQKLALAKQLNLRPRQVEVWFQNRRARTKLKQ). The segment at 145 to 189 (KQTEVDCEYLKRCCETLTEENRRLQKELAELRALKTVHPFYMHLP) is leucine-zipper. Residues 214–244 (AATSSTAAPPAAPSSGGIAATSSSSAAAAAA) form a disordered region.

The protein belongs to the HD-ZIP homeobox family. Class II subfamily. As to expression, expressed in stems, leaf sheaths and blades and panicles.

It is found in the nucleus. Probable transcription factor. The sequence is that of Homeobox-leucine zipper protein HOX11 (HOX11) from Oryza sativa subsp. indica (Rice).